We begin with the raw amino-acid sequence, 298 residues long: MLGKLLQKVLKAYFVQQSPVEELLPDLNVIFTDSQNPPDFLTSLRRRGMEVEYPESAKIIFPKPEYWFRWEQRYVYEDVDKGEVFFLDGYGKLHEGIGSYEAQVFLNENREVVSVFYQRLAPYDTKWEKDREGWTWFLKGSGKLVFDTEIVSFDYPLVLGKRWRSEGRMGAMTVESRGVVIAYISPDGEVEVAEGYSYQPPVKPPEPLEALDFMGLDELLEVGKATTTWDKVVIPDGPRKGENVQGYYVTMVEYLLNGSLAMKMEIWKDVRGCVPVIAYHPAGMRTERQVLVARSWCL.

This is an uncharacterized protein from Archaeoglobus fulgidus (strain ATCC 49558 / DSM 4304 / JCM 9628 / NBRC 100126 / VC-16).